We begin with the raw amino-acid sequence, 567 residues long: Diacylglycerol kinase epsilon (567 aa).

The helical transmembrane segment at 22 to 42 (LILWTLCSVLLPVFITFWCSL) threads the bilayer. 2 Phorbol-ester/DAG-type zinc fingers span residues 59-108 (KHGW…RFQC) and 124-177 (PHHW…NEKC). Residues 215-356 (KQWTPLIILA…LDRWKVQVTN (142 aa)) form the DAGKc domain.

This sequence belongs to the eukaryotic diacylglycerol kinase family. As to expression, expressed predominantly in testis. Expressed in endothelium, platelets and podocytes (at protein level).

It is found in the membrane. It localises to the cytoplasm. It carries out the reaction a 1,2-diacyl-sn-glycerol + ATP = a 1,2-diacyl-sn-glycero-3-phosphate + ADP + H(+). The catalysed reaction is 1-hexadecanoyl-2-(5Z,8Z,11Z,14Z-eicosatetraenoyl)-sn-glycerol + ATP = 1-hexadecanoyl-2-(5Z,8Z,11Z,14Z-eicosatetraenoyl)-sn-glycero-3-phosphate + ADP + H(+). The enzyme catalyses 1-octadecanoyl-2-(5Z,8Z,11Z,14Z-eicosatetraenoyl)-sn-glycerol + ATP = 1-octadecanoyl-2-(5Z,8Z,11Z,14Z-eicosatetraenoyl)-sn-glycero-3-phosphate + ADP + H(+). It catalyses the reaction 1-eicosanoyl-2-(5Z,8Z,11Z,14Z)-eicosatetraenoyl-sn-glycerol + ATP = 1-eicosanoyl-2-(5Z,8Z,11Z,14Z)-eicosatetraenoyl-sn-glycero-3-phosphate + ADP + H(+). It carries out the reaction 1,2-di-(5Z,8Z,11Z,14Z)-eicosatetraenoyl-sn-glycerol + ATP = 1,2-di-(5Z,8Z,11Z,14Z)-eicosatetraenoyl-sn-glycero-3-phosphate + ADP + H(+). The catalysed reaction is 1-octadecanoyl-2-(9Z,12Z)-octadecadienoyl-sn-glycerol + ATP = 1-octadecanoyl-2-(9Z,12Z-octadecadienoyl)-sn-glycero-3-phosphate + ADP + H(+). The enzyme catalyses 1,2-di-(9Z,12Z-octadecadienoyl)-sn-glycerol + ATP = 1,2-di-(9Z,12Z-octadecadienoyl)-sn-glycero-3-phosphate + ADP + H(+). It catalyses the reaction 1,2-di-(9Z-octadecenoyl)-sn-glycerol + ATP = 1,2-di-(9Z-octadecenoyl)-sn-glycero-3-phosphate + ADP + H(+). It functions in the pathway lipid metabolism; glycerolipid metabolism. Its activity is regulated as follows. Undergoes competitive inhibition by its own product 1,2-diacyl-sn-glycero-3-phosphate/phosphatidic acid. The strongest inhibition being observed in vitro with 1-octadecanoyl-2-(5Z,8Z,11Z,14Z-eicosatetraenoyl)-sn-glycero-3-phosphate, a major intermediate in the phosphatidylinositol turnover cycle and more generally by diacylglycerols with an arachidonoyl acyl chain at the sn-2 position. Its function is as follows. Membrane-bound diacylglycerol kinase that converts diacylglycerol/DAG into phosphatidic acid/phosphatidate/PA and regulates the respective levels of these two bioactive lipids. Thereby, acts as a central switch between the signaling pathways activated by these second messengers with different cellular targets and opposite effects in numerous biological processes. Also plays an important role in the biosynthesis of complex lipids. Displays specificity for diacylglycerol substrates with an arachidonoyl acyl chain at the sn-2 position, with the highest activity toward 1-octadecanoyl-2-(5Z,8Z,11Z,14Z-eicosatetraenoyl)-sn-glycerol the main diacylglycerol intermediate within the phosphatidylinositol turnover cycle. Can also phosphorylate diacylglycerol substrates with a linoleoyl acyl chain at the sn-2 position but much less efficiently. This Homo sapiens (Human) protein is Diacylglycerol kinase epsilon (DGKE).